An 88-amino-acid polypeptide reads, in one-letter code: Large ribosomal subunit protein bL27 (88 aa).

The protein belongs to the bacterial ribosomal protein bL27 family.

This Mycobacterium leprae (strain TN) protein is Large ribosomal subunit protein bL27.